Here is a 239-residue protein sequence, read N- to C-terminus: 1-(5-phosphoribosyl)-5-[(5-phosphoribosylamino)methylideneamino] imidazole-4-carboxamide isomerase (239 aa).

Residue D8 is the Proton acceptor of the active site. The active-site Proton donor is D129.

This sequence belongs to the HisA/HisF family.

The protein resides in the cytoplasm. The catalysed reaction is 1-(5-phospho-beta-D-ribosyl)-5-[(5-phospho-beta-D-ribosylamino)methylideneamino]imidazole-4-carboxamide = 5-[(5-phospho-1-deoxy-D-ribulos-1-ylimino)methylamino]-1-(5-phospho-beta-D-ribosyl)imidazole-4-carboxamide. It functions in the pathway amino-acid biosynthesis; L-histidine biosynthesis; L-histidine from 5-phospho-alpha-D-ribose 1-diphosphate: step 4/9. This is 1-(5-phosphoribosyl)-5-[(5-phosphoribosylamino)methylideneamino] imidazole-4-carboxamide isomerase from Cereibacter sphaeroides (strain ATCC 17025 / ATH 2.4.3) (Rhodobacter sphaeroides).